The primary structure comprises 967 residues: MPFTKSCRSANTLRKGIKNGKLILKIIVNDIDNVESCLSGDESNDSKKSSASFYMKLKYGSYRALADNILSTDENRKEDIAVFDVPLPNGLQIDTFTLCLYRKSKWKKQIVGEAYIGIQALLLSTNPDETCKYPVISPPSGRNKENQSPSHQICNLSLKWIIYDPEDADADSKTLAKAWLQQIKMNQTSIDPMSNISKSLKELEVDNVESDLEDSSFIAEPDSSIPPSESSVSISTDTGKETPPSKSKKSSNQPYVSIGEGNSDLLGFVFLEIISVSNLPPLKNVFRTGFDMDPFVITAFSKNIFRTKWLRHNLNPVYNEKFLFEVGAFESNYDLVFKVVDHDKMSLNDSIAVGSFNVQSIINSSAQVDPETGLYSFNIETSSPSQDTSSKAEDSPTVQKIADDFSSAVGKDLRTDIIEQIIPLTLCCKHDFSTPRDVKLSFKAMFFPIAALRQKFWRVMLAQYGDIEDGHIGKLGMYAVLDTLGSNIPNSMVDDIYTELSSKNHDDTSDSITVDEAVICLERLVDLVCHQDQQATQTPQSPSSNEESGPGTPTQTSDQYEDSEDSRNFPSKLYLVYLSNCPLCLKFKLSKVNQQKATVHLATCASHDWKRVDRLMMTSYVSLNQAQRRWFSKAFAKVVYGSSKVGSTSATTLVQNRQTGQIQEEKMNAYVRIGIRLLYRGIRNRRIEGSKVKKILRSLTLKQGMKYDSPISVKEIKPFIRFFDLNMNEVDMPVGGFKTFNEFFYRKLKPGSRPCAFPDNPDILVSPADSRIVAYECIEKATTYWIKGTEFTVERLLGYSNEAQRFVGGSICISRLAPQDYHRFHSPVNGCIGPITKIEGQYYTVNPMAIRSYLDVFGENVRVLIPIDSNEFGKVMLVAVGAMMVGSTVLTVDEGKIVQRSDELGYFKFGGSTVITLFEPNVTSFDEDLLRNSKTKIETLVKMGERIGQKIDPNKPTDAEDHSKSDS.

Residues F217 to Y255 form a disordered region. The span at E220–D237 shows a compositional bias: low complexity. The 124-residue stretch at S250–G373 folds into the C2 domain. Ca(2+) is bound by residues D343, S346, and D349. The segment covering D532–S544 has biased composition (low complexity). Residues D532–S566 are disordered. Polar residues predominate over residues N545–D558. Residues D769, H825, and S912 each act as charge relay system; for autoendoproteolytic cleavage activity in the active site. S912 serves as the catalytic Schiff-base intermediate with substrate; via pyruvic acid; for decarboxylase activity. S912 bears the Pyruvic acid (Ser); by autocatalysis mark. Positions I947–S967 are disordered.

It belongs to the phosphatidylserine decarboxylase family. PSD-B subfamily. Eukaryotic type II sub-subfamily. Heterodimer of a large membrane-associated beta subunit and a small pyruvoyl-containing alpha subunit. It depends on pyruvate as a cofactor. The cofactor is Ca(2+). In terms of processing, is synthesized initially as an inactive proenzyme. Formation of the active enzyme involves a self-maturation process in which the active site pyruvoyl group is generated from an internal serine residue via an autocatalytic post-translational modification. Two non-identical subunits are generated from the proenzyme in this reaction, and the pyruvate is formed at the N-terminus of the alpha chain, which is derived from the carboxyl end of the proenzyme. The autoendoproteolytic cleavage occurs by a canonical serine protease mechanism, in which the side chain hydroxyl group of the serine supplies its oxygen atom to form the C-terminus of the beta chain, while the remainder of the serine residue undergoes an oxidative deamination to produce ammonia and the pyruvoyl prosthetic group on the alpha chain. During this reaction, the Ser that is part of the protease active site of the proenzyme becomes the pyruvoyl prosthetic group, which constitutes an essential element of the active site of the mature decarboxylase.

It localises to the golgi apparatus membrane. The protein resides in the endosome membrane. It is found in the cytoplasm. The catalysed reaction is a 1,2-diacyl-sn-glycero-3-phospho-L-serine + H(+) = a 1,2-diacyl-sn-glycero-3-phosphoethanolamine + CO2. Its pathway is phospholipid metabolism; phosphatidylethanolamine biosynthesis; phosphatidylethanolamine from CDP-diacylglycerol: step 2/2. Functionally, catalyzes the formation of phosphatidylethanolamine (PtdEtn) from phosphatidylserine (PtdSer). Plays a central role in phospholipid metabolism and in the interorganelle trafficking of phosphatidylserine. Together with psd1 and psd2, responsible for the majority of phosphatidylethanolamine synthesis. This is Phosphatidylserine decarboxylase proenzyme 3 from Schizosaccharomyces pombe (strain 972 / ATCC 24843) (Fission yeast).